We begin with the raw amino-acid sequence, 455 residues long: Pup--protein ligase (455 aa).

Residue glutamate 12 coordinates Mg(2+). Residue arginine 56 coordinates ATP. Tyrosine 58 provides a ligand contact to Mg(2+). The Proton acceptor role is filled by aspartate 60. Residue glutamate 66 coordinates Mg(2+). Positions 69 and 422 each coordinate ATP.

Belongs to the Pup ligase/Pup deamidase family. Pup-conjugating enzyme subfamily.

The catalysed reaction is ATP + [prokaryotic ubiquitin-like protein]-L-glutamate + [protein]-L-lysine = ADP + phosphate + N(6)-([prokaryotic ubiquitin-like protein]-gamma-L-glutamyl)-[protein]-L-lysine.. The protein operates within protein degradation; proteasomal Pup-dependent pathway. It functions in the pathway protein modification; protein pupylation. Catalyzes the covalent attachment of the prokaryotic ubiquitin-like protein modifier Pup to the proteasomal substrate proteins, thereby targeting them for proteasomal degradation. This tagging system is termed pupylation. The ligation reaction involves the side-chain carboxylate of the C-terminal glutamate of Pup and the side-chain amino group of a substrate lysine. The protein is Pup--protein ligase of Acidimicrobium ferrooxidans (strain DSM 10331 / JCM 15462 / NBRC 103882 / ICP).